The following is a 383-amino-acid chain: MSSSADNSNNSSSRFPAAVDSINNNSNSINDASQFHNSYNEVNEINNDTNSQVNNGNNITFHVLVSLKEAAKIIGPQGNTIETIRRENDIKIGISPREKSCSDRLLNVSGPPRQVANSLGQVLRVLTTDYEPEEHVFKHLRFMLPPASKEEIEDPEKWKQIGNLRLICTNPQISSVIGQQGAKIKKLIETHTVKLVASKHFLPDSKDRVLEIQGFPTSVANCINEIAELFIQDDVHVPPRTLPRYYPHSKHTKEIQVSQTLAIPKEFVGALLGVGGNRIANLRKFTKTKIVIGQDPTENGDRIFTVWGNDQKSVKLAQTMLLKNLEVEKKRREEHEASLKDGSSVPAAAAASAATSISASGANQNDSIHTPVSDNESPVVFTE.

KH domains lie at 58-122 (NITF…LGQV), 161-226 (IGNL…INEI), and 256-321 (QVSQ…QTML). A disordered region spans residues 332 to 383 (REEHEASLKDGSSVPAAAAASAATSISASGANQNDSIHTPVSDNESPVVFTE). A compositionally biased stretch (low complexity) spans 343–362 (SSVPAAAAASAATSISASGA). Residues 363–376 (NQNDSIHTPVSDNE) show a composition bias toward polar residues.

This sequence belongs to the HEK2 family. As to quaternary structure, binds RNA.

The protein localises to the cytoplasm. It is found in the P-body. The protein resides in the nucleus. Its subcellular location is the chromosome. It localises to the telomere. Its function is as follows. RNA-binding protein involved in the correct localization of transcripts in the cell. RNA localization is a widespread mechanism for achieving localized protein synthesis. Involved in structural and functional organization of telomeric chromatin and regulates silencing at the HMR locus. This is Heterogeneous nuclear rnp K-like protein 2 (HEK2) from Kluyveromyces lactis (strain ATCC 8585 / CBS 2359 / DSM 70799 / NBRC 1267 / NRRL Y-1140 / WM37) (Yeast).